The chain runs to 361 residues: uncharacterized protein (361 aa).

T12 carries the post-translational modification Phosphothreonine.

It is found in the cytoplasm. It localises to the nucleus. This is an uncharacterized protein from Schizosaccharomyces pombe (strain 972 / ATCC 24843) (Fission yeast).